A 416-amino-acid polypeptide reads, in one-letter code: 26S proteasome regulatory subunit 8 (416 aa).

A compositionally biased stretch (low complexity) spans 1–18 (MAPPASTASSADPSKPTA). The segment at 1–29 (MAPPASTASSADPSKPTAQKLTEESDEKT) is disordered. 200-207 (GPPGTGKT) provides a ligand contact to ATP.

Belongs to the AAA ATPase family. Component of the 19S proteasome regulatory particle complex. The 26S proteasome consists of a 20S core particle (CP) and two 19S regulatory subunits (RP). Interacts with elt-2.

It localises to the cytoplasm. The protein localises to the nucleus. Component of the 26S proteasome, a multiprotein complex involved in the ATP-dependent degradation of ubiquitinated proteins. This complex plays a key role in the maintenance of protein homeostasis by removing misfolded or damaged proteins, which could impair cellular functions, and by removing proteins whose functions are no longer required. Therefore, the proteasome participates in numerous cellular processes, including cell cycle progression, apoptosis, or DNA damage repair. Belongs to the heterohexameric ring of AAA (ATPases associated with diverse cellular activities) proteins that unfolds ubiquitinated target proteins that are concurrently translocated into a proteolytic chamber and degraded into peptides. In addition, regulates gene expression in response to bacterial infection. Binds to the GATA transcription factor elt-2 to control its transcriptional activity and thus the expression of elt-2-dependent genes in response to infection by Gram-negative bacteria such as P.aeruginosa. This chain is 26S proteasome regulatory subunit 8, found in Caenorhabditis elegans.